A 530-amino-acid polypeptide reads, in one-letter code: Protein transport protein SEC9 (530 aa).

Residues 1 to 274 (MGIKKMFQKK…QPANDYNLDL (274 aa)) form a disordered region. Basic and acidic residues predominate over residues 8–22 (QKKEPTEQEIREELS). Low complexity-rich tracts occupy residues 61–100 (NPYANINPGTNNNNNNPYANDNGNNSTGNPNNNSNSNNGG) and 122–141 (GSSPSPYAPTTSTTTRSSNP). A compositionally biased stretch (polar residues) spans 142–160 (YGNNNGSRSSQNTSSPYAK). A compositionally biased stretch (low complexity) spans 161–202 (STNNSSYSNSPYSGSTVNNGNRGGHSNNSNSSAGGNPYAAGG). Composition is skewed to polar residues over residues 203–228 (RSSQSQNSRDNVYTAPATRTSTRQTQ) and 258–268 (RNQQSSQQPAN). 2 consecutive t-SNARE coiled-coil homology domains span residues 313–375 (KFVK…VKEL) and 467–529 (DDME…LNNI).

It belongs to the SNAP-25 family.

Its subcellular location is the membrane. Late secretory t-SNARE protein required for secretion and proper cytokinesis. Plays an important role in the secretion of virulence-associated extracellular enzymes and vesicle-mediated polarized hyphal growth. The sequence is that of Protein transport protein SEC9 (SEC9) from Candida albicans (strain SC5314 / ATCC MYA-2876) (Yeast).